We begin with the raw amino-acid sequence, 473 residues long: Cysteine protease ATG4A (473 aa).

A disordered region spans residues 1-33 (MTSLPGRGVSPSSSDPLCEGNAAPSSSSSGQDL). C160 acts as the Nucleophile in catalysis. Active-site residues include D357 and H359.

It belongs to the peptidase C54 family. Interacts with ATG8.

The protein resides in the cytoplasm. It catalyses the reaction [protein]-C-terminal L-amino acid-glycyl-phosphatidylethanolamide + H2O = [protein]-C-terminal L-amino acid-glycine + a 1,2-diacyl-sn-glycero-3-phosphoethanolamine. Its function is as follows. Cysteine protease that plays a key role in autophagy by mediating both proteolytic activation and delipidation of ATG8 family proteins. The protease activity is required for proteolytic activation of ATG8 family proteins: cleaves the C-terminal amino acid of ATG8 proteins to reveal a C-terminal glycine. Exposure of the glycine at the C-terminus is essential for ATG8 proteins conjugation to phosphatidylethanolamine (PE) and insertion to membranes, which is necessary for autophagy. In addition to the protease activity, also mediates delipidation of PE-conjugated ATG8 proteins. The protein is Cysteine protease ATG4A (ATG4A) of Oryza sativa subsp. indica (Rice).